Reading from the N-terminus, the 168-residue chain is Small ribosomal subunit protein uS9 (168 aa).

Residues 1-38 form a disordered region; that stretch reads MAKIADSIDSAQADSVENVESYSTETPESAAPAAPRPV. Polar residues predominate over residues 9–22; it reads DSAQADSVENVESY. Residues 23-37 are compositionally biased toward low complexity; that stretch reads STETPESAAPAAPRP.

This sequence belongs to the universal ribosomal protein uS9 family.

The polypeptide is Small ribosomal subunit protein uS9 (Leifsonia xyli subsp. xyli (strain CTCB07)).